The chain runs to 509 residues: Maturase K (509 aa).

This sequence belongs to the intron maturase 2 family. MatK subfamily.

The protein localises to the plastid. It is found in the chloroplast. Functionally, usually encoded in the trnK tRNA gene intron. Probably assists in splicing its own and other chloroplast group II introns. The polypeptide is Maturase K (Portulaca oleracea (Common purslane)).